Consider the following 432-residue polypeptide: Enolase (432 aa).

Glutamine 167 contributes to the (2R)-2-phosphoglycerate binding site. Glutamate 209 functions as the Proton donor in the catalytic mechanism. Mg(2+) contacts are provided by aspartate 246, glutamate 290, and aspartate 317. Residues lysine 342, arginine 371, serine 372, and lysine 393 each coordinate (2R)-2-phosphoglycerate. The active-site Proton acceptor is the lysine 342.

The protein belongs to the enolase family. Component of the RNA degradosome, a multiprotein complex involved in RNA processing and mRNA degradation. It depends on Mg(2+) as a cofactor.

Its subcellular location is the cytoplasm. The protein resides in the secreted. It localises to the cell surface. It catalyses the reaction (2R)-2-phosphoglycerate = phosphoenolpyruvate + H2O. The protein operates within carbohydrate degradation; glycolysis; pyruvate from D-glyceraldehyde 3-phosphate: step 4/5. Its function is as follows. Catalyzes the reversible conversion of 2-phosphoglycerate (2-PG) into phosphoenolpyruvate (PEP). It is essential for the degradation of carbohydrates via glycolysis. This chain is Enolase, found in Klebsiella pneumoniae (strain 342).